A 127-amino-acid chain; its full sequence is Major sperm protein 77/79 (127 aa).

Ala-2 bears the N-acetylalanine mark. Residues 9–126 (DIQTQPGTKI…RRKNLPIEYN (118 aa)) enclose the MSP domain.

As to expression, sperm.

The protein resides in the cell projection. Its subcellular location is the pseudopodium. It is found in the cytoplasm. It localises to the cytoskeleton. Functionally, central component in molecular interactions underlying sperm crawling. Forms an extensive filament system that extends from sperm villipoda, along the leading edge of the pseudopod. This chain is Major sperm protein 77/79 (msp-77), found in Caenorhabditis elegans.